Reading from the N-terminus, the 286-residue chain is Shikimate dehydrogenase (NADP(+)) (286 aa).

Shikimate contacts are provided by residues 22–24 and Thr71; that span reads SRS. Lys75 serves as the catalytic Proton acceptor. Residue Glu87 coordinates NADP(+). 2 residues coordinate shikimate: Asn96 and Asp111. NADP(+)-binding positions include 136–140, 160–165, and Ile225; these read GAGGA and NRTPER. A shikimate-binding site is contributed by Tyr227. Gly248 is a binding site for NADP(+).

The protein belongs to the shikimate dehydrogenase family. Homodimer.

It carries out the reaction shikimate + NADP(+) = 3-dehydroshikimate + NADPH + H(+). It functions in the pathway metabolic intermediate biosynthesis; chorismate biosynthesis; chorismate from D-erythrose 4-phosphate and phosphoenolpyruvate: step 4/7. Its function is as follows. Involved in the biosynthesis of the chorismate, which leads to the biosynthesis of aromatic amino acids. Catalyzes the reversible NADPH linked reduction of 3-dehydroshikimate (DHSA) to yield shikimate (SA). The chain is Shikimate dehydrogenase (NADP(+)) from Rhizobium meliloti (strain 1021) (Ensifer meliloti).